Reading from the N-terminus, the 274-residue chain is Undecaprenyl-diphosphatase (274 aa).

Helical transmembrane passes span 4-24, 41-61, 83-103, 108-128, 184-204, 218-238, and 246-266; these read PLFV…FLPI, DATS…AVCW, FVGL…MFHS, LLFN…LILW, AAEF…VYDL, VFAI…KAFI, and FIAF…TWQL.

The protein belongs to the UppP family.

It is found in the cell inner membrane. It catalyses the reaction di-trans,octa-cis-undecaprenyl diphosphate + H2O = di-trans,octa-cis-undecaprenyl phosphate + phosphate + H(+). Catalyzes the dephosphorylation of undecaprenyl diphosphate (UPP). Confers resistance to bacitracin. This Aromatoleum aromaticum (strain DSM 19018 / LMG 30748 / EbN1) (Azoarcus sp. (strain EbN1)) protein is Undecaprenyl-diphosphatase.